Here is a 498-residue protein sequence, read N- to C-terminus: Lysine--tRNA ligase (498 aa).

Glutamate 407 and glutamate 414 together coordinate Mg(2+).

This sequence belongs to the class-II aminoacyl-tRNA synthetase family. Homodimer. It depends on Mg(2+) as a cofactor.

Its subcellular location is the cytoplasm. The catalysed reaction is tRNA(Lys) + L-lysine + ATP = L-lysyl-tRNA(Lys) + AMP + diphosphate. This chain is Lysine--tRNA ligase (lysS), found in Rhizobium meliloti (strain 1021) (Ensifer meliloti).